The primary structure comprises 205 residues: Putative 3-methyladenine DNA glycosylase (205 aa).

This sequence belongs to the DNA glycosylase MPG family.

This chain is Putative 3-methyladenine DNA glycosylase, found in Bacillus anthracis (strain A0248).